The primary structure comprises 175 residues: Large ribosomal subunit protein uL10 (175 aa).

Belongs to the universal ribosomal protein uL10 family. As to quaternary structure, part of the ribosomal stalk of the 50S ribosomal subunit. The N-terminus interacts with L11 and the large rRNA to form the base of the stalk. The C-terminus forms an elongated spine to which L12 dimers bind in a sequential fashion forming a multimeric L10(L12)X complex.

Forms part of the ribosomal stalk, playing a central role in the interaction of the ribosome with GTP-bound translation factors. The chain is Large ribosomal subunit protein uL10 from Prochlorococcus marinus (strain MIT 9313).